Consider the following 147-residue polypeptide: Siroheme decarboxylase NirG subunit (147 aa).

Belongs to the Ahb/Nir family. In terms of assembly, probably forms a complex composed of NirD, NirL, NirG and NirH. All proteins are required for the total conversion of siroheme to didecarboxysiroheme.

The enzyme catalyses siroheme + 2 H(+) = 12,18-didecarboxysiroheme + 2 CO2. Its pathway is porphyrin-containing compound metabolism. Functionally, involved in heme d1 biosynthesis. Catalyzes the decarboxylation of siroheme into didecarboxysiroheme. This chain is Siroheme decarboxylase NirG subunit, found in Pseudomonas aeruginosa (strain ATCC 15692 / DSM 22644 / CIP 104116 / JCM 14847 / LMG 12228 / 1C / PRS 101 / PAO1).